The following is a 650-amino-acid chain: Laccase-like multicopper oxidase 1 (650 aa).

The first 20 residues, Met1 to Ala20, serve as a signal peptide directing secretion. 3 consecutive Plastocyanin-like domains span residues Gln41–Asp151, Glu162–Asn360, and Lys439–Asp595. Cys46 and Cys254 are joined by a disulfide. N-linked (GlcNAc...) asparagine glycosylation is found at Asn55 and Asn83. Positions 87, 89, 133, and 135 each coordinate Cu cation. 7 residues coordinate Cu cation: His501, His504, His506, His576, Cys577, His578, and His582. Asn620 carries an N-linked (GlcNAc...) asparagine glycan.

This sequence belongs to the multicopper oxidase family. Monomer. N-glycosylation Asn-55 and Asn-83 is involved in folding, conformational stability and laccase activity.

The enzyme catalyses 2 2',3,4-trihydroxy-trans-chalcone + O2 + 2 H(+) = 2 3',4'-dihydroxyaurone + 2 H2O. Its activity is regulated as follows. Retains almost half of its activity in presence of high salt concentrations up to 100 mM NaCl. Retains also more than 85% of its original activity in the presence of 1 mM EDTA, indicating a satisfactory resistance towards chelators, which is rare among metal-containing enzyme. The activity drops significantly in the presence of NaN(3) or SDS. Appears more active in the presence of methanol compared to ethanol, but acetone or DMSO addition severely affect remaining laccase activity. In terms of biological role, yellow laccase-like multicopper oxidase that is able to oxidize a variety of phenolic compounds including standard laccase substrates such as 2'-azino-bis(3-ethylbenzothiazoline-6-sulphonic acid) (ABTS) and 2,6-dimethoxyphenol (2,6-DMP). The existence of an ortho-hydroxy group is crucial for oxidation since pyrogallol and catechol, which contain ortho-hydroxy groups, are readily oxidized, which is not the case for resorcinol and hydroquinone, that contain meta- and para-hydroxy groups, respectively. The same is also true for the existence of a methoxy group in an ortho-position, since 2,6-DMP, guaiacol and ferulic and caffeic acids are also rather easily oxidized compared with the corresponding unsubstituted compound. Can be used for the bioconversion of 2',3,4-trihy-droxychalcone to 3',4'-dihydroxy-aurone, a bioactive aurone recently shown to possess inhibitory activity against several isoforms of the histone deacetylase complex (HDAC). The polypeptide is Laccase-like multicopper oxidase 1 (Thermothelomyces thermophilus (strain ATCC 42464 / BCRC 31852 / DSM 1799) (Sporotrichum thermophile)).